Consider the following 596-residue polypeptide: Nuclear receptor subfamily 2 group C member 2 (596 aa).

Residue Ser19 is modified to Phosphoserine; by MAPK. Ser46 carries the post-translational modification Phosphoserine. A phosphoserine; by MAPK mark is found at Ser55 and Ser68. The residue at position 98 (Ser98) is a Phosphoserine. The segment at residues 114 to 189 (VEYCVVCGDK…MGMKMESVQS (76 aa)) is a DNA-binding region (nuclear receptor). NR C4-type zinc fingers lie at residues 117–137 (CVVCGDKASGRHYGAVSCEGC) and 153–177 (CRSNQDCIINKHHRNRCQFCRLKKC). A Glycyl lysine isopeptide (Lys-Gly) (interchain with G-Cter in SUMO2) cross-link involves residue Lys192. Ser219 carries the post-translational modification Phosphoserine. Lys231 is subject to N6-acetyllysine. The region spanning 341–583 (GSIHVISRDQ…SIIPYILKME (243 aa)) is the NR LBD domain.

It belongs to the nuclear hormone receptor family. NR2 subfamily. In terms of assembly, homodimer; can bind DNA as homodimer. Heterodimer; binds DNA as a heterodimer with NR2C1 required for chromatin remodeling and for binding to promoter regions such as globin DR1 repeats. Interacts with PCAF; the interaction preferentially occurs on the non-phosphorylated form and induces NR2C2-mediated transactivation activity and does not require the ligand-binding domain. Interacts (MAPK-mediated phosphorylated form) with NRIP1; the interaction promotes repression of NR2C2-mediated activity. Interacts with NR2C2AP; the interaction represses selective NR2C2-mediated transcriptional activity. Interacts with NLRP10. Interacts (via ligand-binding region) with transcriptional corepressor JAZF1; the interaction promotes NR2C2-mediated transcriptional repression. Phosphorylation on Ser-19 and Ser-68 is an important regulator of NR2C2-mediated transcriptional activity. Phosphorylation on these residues recruits the corepressor, NRIP1, leading to transcripional repression, whereas the non-phosphorylated form preferentially recruits the coactivator, PCAF.

The protein resides in the nucleus. Functionally, orphan nuclear receptor that can act as a repressor or activator of transcription. An important repressor of nuclear receptor signaling pathways such as retinoic acid receptor, retinoid X, vitamin D3 receptor, thyroid hormone receptor and estrogen receptor pathways. May regulate gene expression during the late phase of spermatogenesis. Together with NR2C1, forms the core of the DRED (direct repeat erythroid-definitive) complex that represses embryonic and fetal globin transcription including that of GATA1. Binds to hormone response elements (HREs) consisting of two 5'-AGGTCA-3' half site direct repeat consensus sequences. Plays a fundamental role in early embryonic development and embryonic stem cells. Required for normal spermatogenesis and cerebellum development. Appears to be important for neurodevelopmentally regulated behavior. Activates transcriptional activity of LHCG. Antagonist of PPARA-mediated transactivation. The polypeptide is Nuclear receptor subfamily 2 group C member 2 (NR2C2) (Homo sapiens (Human)).